A 610-amino-acid polypeptide reads, in one-letter code: WD repeat-containing protein 46 (610 aa).

A disordered region spans residues 1–103 (METAPKPGKD…TQDPFPGPAP (103 aa)). Basic and acidic residues predominate over residues 7 to 19 (PGKDVPPKKDKLQ). A Phosphoserine modification is found at Ser-41. Positions 65-77 (KKSRISKKPQVPK) are enriched in basic residues. WD repeat units follow at residues 193-234 (LRQF…CEIN), 235-272 (VMEAVRDIRFLHSEALLAVAQNRWLHIYDNQGIELHCI), 274-312 (RCDRVTRLEFLPFHFLLATASETGFLTYLDVSVGKIVAA), 315-354 (ARAGRLDVMSQNPYNAVIHLGHSNGTVSLWSPAMKEPLAK), 357-396 (CHRGGVRAVAVDSTGTYMATSGLDHQLKIFDLRGTYQPLS), and 399-436 (TLPHGAGHLAFSQRGLLVAGMGDVVNIWAGQGKASPPS). Positions 538–610 (ERLGYDPQAK…RPSALDRFVR (73 aa)) are disordered. The segment covering 572-582 (VMDEEHRDKVR) has biased composition (basic and acidic residues).

As to quaternary structure, part of the small subunit (SSU) processome, composed of more than 70 proteins and the RNA chaperone small nucleolar RNA (snoRNA) U3. Interacts with DDX21, NCL, NOP2 and EBNA1BP2.

It localises to the nucleus. The protein resides in the nucleolus. Its function is as follows. Scaffold component of the nucleolar structure. Required for localization of DDX21 and NCL to the granular compartment of the nucleolus. Part of the small subunit (SSU) processome, first precursor of the small eukaryotic ribosomal subunit. During the assembly of the SSU processome in the nucleolus, many ribosome biogenesis factors, an RNA chaperone and ribosomal proteins associate with the nascent pre-rRNA and work in concert to generate RNA folding, modifications, rearrangements and cleavage as well as targeted degradation of pre-ribosomal RNA by the RNA exosome. This Homo sapiens (Human) protein is WD repeat-containing protein 46 (WDR46).